Here is a 309-residue protein sequence, read N- to C-terminus: Probable cell wall protein PGA50 (309 aa).

An N-terminal signal peptide occupies residues 1–17; sequence MKLNLLLLLFIVELVAA. 5 N-linked (GlcNAc...) asparagine glycosylation sites follow: N67, N115, N248, N267, and N277. Residues 241–281 form a disordered region; the sequence is STTTFSSNGTSSGTTNGDTRAETKSSNSTQTSSSDKNSSQI. The GPI-anchor amidated serine moiety is linked to residue S286. A propeptide spans 287–309 (removed in mature form); that stretch reads TGVANFVASFGMGTLLLFVLSLC.

Belongs to the IHD1 family. Post-translationally, the GPI-anchor is attached to the protein in the endoplasmic reticulum and serves to target the protein to the cell surface. There, the glucosamine-inositol phospholipid moiety is cleaved off and the GPI-modified mannoprotein is covalently attached via its lipidless GPI glycan remnant to the 1,6-beta-glucan of the outer cell wall layer.

Its subcellular location is the secreted. It is found in the cell wall. The protein localises to the membrane. Functionally, probable GPI-anchored cell wall protein that may be involved in cell wall organization, hyphal growth, as well as in virulence. This chain is Probable cell wall protein PGA50 (PGA50), found in Candida albicans (strain SC5314 / ATCC MYA-2876) (Yeast).